Reading from the N-terminus, the 92-residue chain is Large ribosomal subunit protein eL31 (92 aa).

It belongs to the eukaryotic ribosomal protein eL31 family.

The chain is Large ribosomal subunit protein eL31 from Pyrobaculum arsenaticum (strain DSM 13514 / JCM 11321 / PZ6).